The following is a 554-amino-acid chain: Glucose-6-phosphate isomerase (554 aa).

Glu359 (proton donor) is an active-site residue. Active-site residues include His390 and Lys518.

It belongs to the GPI family.

It localises to the cytoplasm. The catalysed reaction is alpha-D-glucose 6-phosphate = beta-D-fructose 6-phosphate. It functions in the pathway carbohydrate biosynthesis; gluconeogenesis. It participates in carbohydrate degradation; glycolysis; D-glyceraldehyde 3-phosphate and glycerone phosphate from D-glucose: step 2/4. Functionally, catalyzes the reversible isomerization of glucose-6-phosphate to fructose-6-phosphate. This Pseudomonas savastanoi pv. phaseolicola (strain 1448A / Race 6) (Pseudomonas syringae pv. phaseolicola (strain 1448A / Race 6)) protein is Glucose-6-phosphate isomerase.